An 88-amino-acid chain; its full sequence is Putative sulfur carrier protein AF_0552 (88 aa).

The protein belongs to the sulfur carrier protein CysO family.

The polypeptide is Putative sulfur carrier protein AF_0552 (Archaeoglobus fulgidus (strain ATCC 49558 / DSM 4304 / JCM 9628 / NBRC 100126 / VC-16)).